The primary structure comprises 616 residues: D-glucuronyl C5-epimerase (616 aa).

Topologically, residues Met1–Arg12 are cytoplasmic. Residues Ile13–Leu29 form a helical; Signal-anchor for type II membrane protein membrane-spanning segment. Over Thr30–Asn616 the chain is Extracellular. Substrate is bound by residues Tyr136, Arg141–Arg143, and Gln169. Asn188, Asn232, Asn267, and Asn471 each carry an N-linked (GlcNAc...) asparagine glycan. Residues Tyr504, Arg562, and Arg574–Val580 contribute to the substrate site.

It belongs to the D-glucuronyl C5-epimerase family. In terms of assembly, homodimer. Expression in comma stage embryos is strong in the hypodermis and intestine and weaker in the head region. In late embryos, larval, and adult stages, expressed primarily in hypodermis and intestine.

It localises to the cell membrane. The protein localises to the secreted. It is found in the extracellular space. The protein resides in the extracellular matrix. Its subcellular location is the basement membrane. The enzyme catalyses [heparosan-N-sulfate](n) = [heparan-N-sulfate](n). The protein operates within glycan metabolism; heparan sulfate biosynthesis. Its pathway is glycan metabolism; heparin biosynthesis. Converts D-glucuronic acid residues adjacent to N-sulfate sugar residues to L-iduronic acids. Plays a role in the early migration of AQR and PQR neurons, which descend from the Q neuroblasts. This chain is D-glucuronyl C5-epimerase (hse-5), found in Caenorhabditis elegans.